Here is an 840-residue protein sequence, read N- to C-terminus: Phosphatidylinositol-glycan-specific phospholipase D (840 aa).

Positions 1–23 (MSAFRLWPGLLIMLGSLCHRGSP) are cleaved as a signal peptide. N-linked (GlcNAc...) asparagine glycosylation is found at N94, N271, N292, N307, and N321. FG-GAP repeat units follow at residues 367 to 428 (SPLA…GLPP), 436 to 497 (EAHR…GGMS), 499 to 559 (SPNI…LSDK), 563 to 623 (NVEA…SLGR), 633 to 693 (QSWF…GATR), 704 to 770 (LLLS…TLGD), and 788 to 840 (QYVL…LGSD). N501, N568, N591, N604, and N659 each carry an N-linked (GlcNAc...) asparagine glycan.

This sequence belongs to the GPLD1 family. As to quaternary structure, monomer.

The protein resides in the secreted. The enzyme catalyses a 6-(alpha-D-glucosaminyl)-1-(1,2-diacyl-sn-glycero-3-phospho)-1D-myo-inositol + H2O = 6-(alpha-D-glucosaminyl)-1D-myo-inositol + a 1,2-diacyl-sn-glycero-3-phosphate + H(+). Its function is as follows. This protein hydrolyzes the inositol phosphate linkage in proteins anchored by phosphatidylinositol glycans (GPI-anchor) thus releasing these proteins from the membrane. This chain is Phosphatidylinositol-glycan-specific phospholipase D (GPLD1), found in Homo sapiens (Human).